Reading from the N-terminus, the 348-residue chain is MKKSLIALTLAALPVAAMADVTLYGAIKAGVQTYRSVEHTDGKVSKVETGSEIADFGSKIGFKGQEDLGNGLKAVWQLEQGASVAGTNTGWGNKQSFVGLKGGFGTIRAGSLNSPLKNTGANVNAWESGKFTGNVLEISGMAQREHRYLSVRYDSPEFAGFSGSVQYAPKDNSGSNGESYHVGLNYQNSGFFAQYAGLFQRYGEGTKKIEYDDQTYSIPSLFVEKLQVHRLVGGYDNNALYVSVAAQQQDAKLYGAMSGNSHNSQTEVAATAAYRFGNVTPRVSYAHGFKGTVDSANHDNTYDQVVVGAEYDFSKRTSALVSAGWLQGGKGADKIVSTASAVVLRHKF.

The first 19 residues, 1–19 (MKKSLIALTLAALPVAAMA), serve as a signal peptide directing secretion.

Belongs to the Gram-negative porin family. Homotrimer.

The protein localises to the cell outer membrane. Functionally, serves as a slightly cation selective porin. Major antigen on the gonococcal cell surface and it may have pathogenic properties in addition to its porin activity. This is Major outer membrane protein P.IB (porB) from Neisseria gonorrhoeae.